Here is a 2210-residue protein sequence, read N- to C-terminus: RNA-directed RNA polymerase L (2210 aa).

Positions 26–285 are endonuclease; it reads KAIFLSQTKL…KCAIMSEEDS (260 aa). Glutamate 51, aspartate 88, and glutamate 101 together coordinate Mn(2+). The active site involves lysine 114. In terms of domain architecture, RdRp catalytic spans 1163-1359; that stretch reads LDMKSVVRQG…FLSDKLNKFV (197 aa). Aspartate 1319 contacts Mg(2+).

Belongs to the Bunyavirales RNA polymerase family. In terms of assembly, homomultimer; the oligomeric structure is essential for the polymerase activity. Interacts with nucleoprotein N. Interacts with protein Z; this interaction inhibits viral transcription and replication, Z partially blocks the product exit tunnel for the releasing nascent RNA product. Requires Mn(2+) as cofactor. It depends on Mg(2+) as a cofactor.

The protein resides in the virion. Its subcellular location is the host cytoplasm. The enzyme catalyses RNA(n) + a ribonucleoside 5'-triphosphate = RNA(n+1) + diphosphate. Its function is as follows. RNA-dependent RNA polymerase, which is responsible for the replication and transcription of the viral RNA genome using antigenomic RNA as an intermediate. During transcription, synthesizes subgenomic RNAs and assures their capping by a cap-snatching mechanism, which involves the endonuclease activity cleaving the host capped pre-mRNAs. These short capped RNAs are then used as primers for viral transcription. The 3'-end of subgenomic mRNAs molecules are heterogeneous and not polyadenylated. The replicase function is to direct synthesis of antigenomic and genomic RNA which are encapsidated and non capped. As a consequence of the use of the same enzyme for both transcription and replication, these mechanisms need to be well coordinated. These processes may be regulated by proteins N and Z in a dose-dependent manner. Z protein inhibits the viral polymerase L und thus the viral transcription and RNA synthesis. The protein is RNA-directed RNA polymerase L of Sigmodon alstoni (PIRV).